A 243-amino-acid chain; its full sequence is Trypsin (243 aa).

The first 15 residues, 1-15 (MKFLLLCVLLGAAAA), serve as a signal peptide directing secretion. The propeptide at 16 to 20 (FDDDK) is activation peptide. One can recognise a Peptidase S1 domain in the interval 21 to 241 (IIGGATCAKS…YNAWIQNTIA (221 aa)). Disulfide bonds link cysteine 27–cysteine 157, cysteine 45–cysteine 61, cysteine 129–cysteine 230, cysteine 136–cysteine 203, cysteine 168–cysteine 182, and cysteine 193–cysteine 217. Histidine 60 acts as the Charge relay system in catalysis. Ca(2+)-binding residues include glutamate 72, asparagine 74, and glutamate 82. The active-site Charge relay system is aspartate 104. The active-site Charge relay system is serine 197.

It belongs to the peptidase S1 family. Ca(2+) serves as cofactor.

It is found in the secreted. It localises to the extracellular space. The enzyme catalyses Preferential cleavage: Arg-|-Xaa, Lys-|-Xaa.. In Xenopus laevis (African clawed frog), this protein is Trypsin.